A 102-amino-acid polypeptide reads, in one-letter code: MASKKAAMVMMAMIVIMAMLVDTSVAIDLCGMSQDELNECKPAVSKENPTSPSQPCCTALQHADFACLCGYKNSPWLGSFGVDPELASALPKQCGLANAPTC.

Positions M1–V25 are cleaved as a signal peptide. Disulfide bonds link C30–C67, C40–C56, C57–C94, and C69–C102. Position 34 (Q34) interacts with a 1-acyl-sn-glycero-3-phosphocholine. E36 is a binding site for Zn(2+). Position 38 (N38) interacts with a 1-acyl-sn-glycero-3-phosphocholine. Position 62 (H62) interacts with Zn(2+).

Belongs to the A9/FIL1 family. Self-interacts and binds to AZI1. Does not interact with PDLP1. The cofactor is Zn(2+).

The protein localises to the secreted. It localises to the extracellular space. It is found in the apoplast. Its subcellular location is the endoplasmic reticulum. The protein resides in the cell junction. The protein localises to the plasmodesma. Its function is as follows. Putative lipid transfer protein required for systemic acquired resistance (SAR) long distance signaling. May interact with a lipid-derived molecule to promote long distance signaling associated with SAR. Together with AZI1, required for glycerol-3-phosphate- (G3P) and azelaic acid- (AA) induced systemic acquired resistance (SAR). Component of plant systemic immunity involved in priming defenses in a AA-dependent manner, by modulating production and/or translocation of a mobile signal(s) during SAR. Is able to bind with high affinity monoacylated phospholipids, mainly lysophosphatidylcholines. The polypeptide is Putative lipid-transfer protein DIR1 (DIR1) (Arabidopsis thaliana (Mouse-ear cress)).